The chain runs to 380 residues: E3 ubiquitin-protein ligase PHF7 (380 aa).

The disordered stretch occupies residues 1–23 (MRTIKEKKEHPRLRKTARTKKVT). Basic residues predominate over residues 10–23 (HPRLRKTARTKKVT). Residues 30-68 (GPVCLLCFQEPGDPEKLGEFLQKDNLCVHYFCLILSSKL) form a C2HC pre-PHD-type zinc finger. Residues C33, C36, H58, and C61 each contribute to the Zn(2+) site. Residues 67–92 (KLPQKGQPNRGLHGFMPEDIKKEAAR) are required for interaction and ubiquitination of the nucleosome core particle. The segment at 96–145 (KVCFVCKRKGAAIRCQKDQCVQNFHLPCGQERGCLSQFFGEYKSYCGKHR) adopts a PHD-type zinc-finger fold. Zn(2+)-binding residues include C98, C101, C110, C115, H120, C123, C141, H144, C159, C162, C178, C179, H185, C188, C203, C206, C247, C252, C272, C275, H281, C284, C296, and C299. A required for interaction with ubiquitinated UBE2D2 region spans residues 150-306 (IHQRSFGESC…NECLPASTED (157 aa)). Residues 159–207 (CVLCCEDLSRASVENIRSPCCSQAIYHRKCIQKYAHTSAKHFFKCPQCN) form an RING-type; degenerate zinc finger. The segment at 243–300 (RYQHCDAPICLYEQGRDSFEDEGRWRLILCATCGSHGTHRDCSSLRPNSKKWECNECL) is required for association with and ubiquitination of H3. Residues 352 to 367 (EKPESSSGSSCQSWRS) are compositionally biased toward low complexity. Positions 352–380 (EKPESSSGSSCQSWRSKGIKVTKDCKKSK) are disordered.

As to quaternary structure, interacts with MEF2C; the interaction promotes MEF2C binding to its transcription targets. Interacts with GATA4; the interaction promotes GATA4 binding to its transcription targets. Interacts with UBE2D2; the interaction inhibits cleavage of PHF7 and promotes association of the complex with the nucleosome core particle.

The protein resides in the nucleus. The enzyme catalyses S-ubiquitinyl-[E2 ubiquitin-conjugating enzyme]-L-cysteine + [acceptor protein]-L-lysine = [E2 ubiquitin-conjugating enzyme]-L-cysteine + N(6)-ubiquitinyl-[acceptor protein]-L-lysine.. Its pathway is protein modification; protein ubiquitination. E3 ubiquitin-protein ligase which ubiquitinates histone H3 at 'Lys-14'. Required for male fertility, via inhibition of SPOP-mediated BRDT degradation when in the presence of acetylated histone H4 in early condensing spermatids. Stabilization of BRDT allows it to facilitate histone removal in early condensing spermatids and promote the progression of histone-to-protamine exchange. Promotes the expression of steroidogenesis proteins in the testes, and as a result plays a role in maintaining testosterone levels and repressing osteoclastogenesis. Promotes transcription of cardiac enhancer genes by facilitating binding of cardiac transcription factors such as MEF2C and GATA4 to target gene promoters. Ubiquitinates histone H4. Ubiquitinates histone H2A and H3 as part of the nucleosome core particle. The chain is E3 ubiquitin-protein ligase PHF7 from Rattus norvegicus (Rat).